A 188-amino-acid polypeptide reads, in one-letter code: Ribose 1,5-bisphosphate phosphokinase PhnN (188 aa).

This sequence belongs to the ribose 1,5-bisphosphokinase family.

The enzyme catalyses alpha-D-ribose 1,5-bisphosphate + ATP = 5-phospho-alpha-D-ribose 1-diphosphate + ADP. It participates in metabolic intermediate biosynthesis; 5-phospho-alpha-D-ribose 1-diphosphate biosynthesis; 5-phospho-alpha-D-ribose 1-diphosphate from D-ribose 5-phosphate (route II): step 3/3. Functionally, catalyzes the phosphorylation of ribose 1,5-bisphosphate to 5-phospho-D-ribosyl alpha-1-diphosphate (PRPP). This is Ribose 1,5-bisphosphate phosphokinase PhnN from Dickeya zeae (strain Ech586) (Dickeya dadantii (strain Ech586)).